A 167-amino-acid chain; its full sequence is Ribosome maturation factor RimM (167 aa).

Residues Glu92–Met165 enclose the PRC barrel domain.

The protein belongs to the RimM family. As to quaternary structure, binds ribosomal protein uS19.

The protein localises to the cytoplasm. An accessory protein needed during the final step in the assembly of 30S ribosomal subunit, possibly for assembly of the head region. Essential for efficient processing of 16S rRNA. May be needed both before and after RbfA during the maturation of 16S rRNA. It has affinity for free ribosomal 30S subunits but not for 70S ribosomes. The protein is Ribosome maturation factor RimM of Alkaliphilus oremlandii (strain OhILAs) (Clostridium oremlandii (strain OhILAs)).